A 289-amino-acid polypeptide reads, in one-letter code: Protein shisa-2 homolog (289 aa).

A signal peptide spans 1-27; it reads MWAGCHPDAASLLRLLLAALLAAGALA. Residues 28–104 lie on the Extracellular side of the membrane; the sequence is SGEYCHGWLD…RADKDGPDGS (77 aa). Residues 81-102 are disordered; that stretch reads GCDNDRQQGAGEPGRADKDGPD. Residues 105–125 form a helical membrane-spanning segment; sequence AVPIYVPFLIVGSVFVAFIVL. Over 126 to 289 the chain is Cytoplasmic; it reads GSLVAACCCR…EQKMYPAVTV (164 aa). The segment at 162–198 is disordered; the sequence is PSASTSRGSSSRQSSTAASSSSSANSGARAPPTRSQT. Low complexity predominate over residues 163-191; sequence SASTSRGSSSRQSSTAASSSSSANSGARA.

This sequence belongs to the shisa family.

It localises to the endoplasmic reticulum membrane. Its function is as follows. Plays an essential role in the maturation of presomitic mesoderm cells by individual attenuation of both FGF and WNT signaling. This Bos taurus (Bovine) protein is Protein shisa-2 homolog (SHISA2).